A 206-amino-acid chain; its full sequence is 2,3-bisphosphoglycerate-dependent phosphoglycerate mutase (206 aa).

Residues 9–16 (RHGQSEWN), 22–23 (TG), R61, 88–91 (ERDY), K99, 115–116 (RR), and 159–160 (GN) contribute to the substrate site. H10 acts as the Tele-phosphohistidine intermediate in catalysis. E88 acts as the Proton donor/acceptor in catalysis.

It belongs to the phosphoglycerate mutase family. BPG-dependent PGAM subfamily. In terms of assembly, homodimer.

It catalyses the reaction (2R)-2-phosphoglycerate = (2R)-3-phosphoglycerate. The protein operates within carbohydrate degradation; glycolysis; pyruvate from D-glyceraldehyde 3-phosphate: step 3/5. Its function is as follows. Catalyzes the interconversion of 2-phosphoglycerate and 3-phosphoglycerate. The protein is 2,3-bisphosphoglycerate-dependent phosphoglycerate mutase of Brucella anthropi (strain ATCC 49188 / DSM 6882 / CCUG 24695 / JCM 21032 / LMG 3331 / NBRC 15819 / NCTC 12168 / Alc 37) (Ochrobactrum anthropi).